The sequence spans 183 residues: NADH-quinone oxidoreductase subunit A (183 aa).

3 helical membrane passes run 11–31, 63–83, and 98–118; these read IIAFVIGVTFLCVFMLTVPLL, FYLVAIFFVVFDLEALYLYAW, and VVIFVVDLLIALVYAFSVGAL. Residues 159–183 are disordered; that stretch reads TGQIPAQSSGRVKSKTTPALSSEKE.

The protein belongs to the complex I subunit 3 family. As to quaternary structure, NDH-1 is composed of 14 different subunits. Subunits NuoA, H, J, K, L, M, N constitute the membrane sector of the complex.

It is found in the cell inner membrane. It carries out the reaction a quinone + NADH + 5 H(+)(in) = a quinol + NAD(+) + 4 H(+)(out). Its function is as follows. NDH-1 shuttles electrons from NADH, via FMN and iron-sulfur (Fe-S) centers, to quinones in the respiratory chain. The immediate electron acceptor for the enzyme in this species is believed to be ubiquinone. Couples the redox reaction to proton translocation (for every two electrons transferred, four hydrogen ions are translocated across the cytoplasmic membrane), and thus conserves the redox energy in a proton gradient. The sequence is that of NADH-quinone oxidoreductase subunit A from Acinetobacter baumannii (strain AYE).